Consider the following 192-residue polypeptide: Ion-translocating oxidoreductase complex subunit A (192 aa).

Transmembrane regions (helical) follow at residues 5 to 25, 39 to 59, 65 to 85, 102 to 122, 134 to 154, and 171 to 191; these read LLLL…FLGL, IGMS…SYLV, LPFD…AVVV, ALGI…VALL, AIYG…FSAM, and AIAM…TGLV.

Belongs to the NqrDE/RnfAE family. The complex is composed of six subunits: RnfA, RnfB, RnfC, RnfD, RnfE and RnfG.

It is found in the cell inner membrane. In terms of biological role, part of a membrane-bound complex that couples electron transfer with translocation of ions across the membrane. In Shewanella oneidensis (strain ATCC 700550 / JCM 31522 / CIP 106686 / LMG 19005 / NCIMB 14063 / MR-1), this protein is Ion-translocating oxidoreductase complex subunit A.